The following is a 293-amino-acid chain: Methylsterol monooxygenase 1 (293 aa).

2 helical membrane-spanning segments follow: residues 55–75 and 100–120; these read LIVHEAIYFLFSLPGFLFQFI and KILFNHFFIQLPLICGTYYFT. The region spanning 144-274 is the Fatty acid hydroxylase domain; the sequence is GCAVIEDTWH…FTWWDKLFGT (131 aa). The Histidine box-1 signature appears at 157-161; it reads HRLLH. A Histidine box-2 motif is present at residues 170 to 174; it reads HKVHH. A helical membrane pass occupies residues 199 to 219; it reads FFIGIVLLCDHVILLWAWVTI. The Histidine box-3 signature appears at 249 to 255; it reads HHDFHHM.

The protein belongs to the sterol desaturase family. Fe cation is required as a cofactor. Post-translationally, ubiquitinated by MARCHF6, leading to proteasomal degradation.

The protein localises to the endoplasmic reticulum membrane. The catalysed reaction is 4,4-dimethyl-5alpha-cholest-7-en-3beta-ol + 6 Fe(II)-[cytochrome b5] + 3 O2 + 5 H(+) = 4alpha-carboxy-4beta-methyl-5alpha-cholest-7-ene-3beta-ol + 6 Fe(III)-[cytochrome b5] + 4 H2O. It catalyses the reaction 4,4-dimethyl-5alpha-cholesta-8,24-dien-3beta-ol + 6 Fe(II)-[cytochrome b5] + 3 O2 + 5 H(+) = 4beta-methylzymosterol-4alpha-carboxylate + 6 Fe(III)-[cytochrome b5] + 4 H2O. The enzyme catalyses 4alpha-methylzymosterol + 6 Fe(II)-[cytochrome b5] + 3 O2 + 5 H(+) = 4alpha-carboxyzymosterol + 6 Fe(III)-[cytochrome b5] + 4 H2O. It carries out the reaction 4alpha-methyl-5alpha-cholest-7-en-3beta-ol + 6 Fe(II)-[cytochrome b5] + 3 O2 + 5 H(+) = 4alpha-carboxy-5alpha-cholest-7-en-3beta-ol + 6 Fe(III)-[cytochrome b5] + 4 H2O. The catalysed reaction is 4,4-dimethyl-5alpha-cholest-8-en-3beta-ol + 6 Fe(II)-[cytochrome b5] + 3 O2 + 5 H(+) = 4alpha-carboxy-4beta-methyl-5alpha-cholest-8-en-3beta-ol + 6 Fe(III)-[cytochrome b5] + 4 H2O. It catalyses the reaction 4alpha-methyl-5alpha-cholest-8-en-3beta-ol + 6 Fe(II)-[cytochrome b5] + 3 O2 + 5 H(+) = 4alpha-carboxy-5alpha-cholest-8-ene-3beta-ol + 6 Fe(III)-[cytochrome b5] + 4 H2O. It participates in steroid biosynthesis; zymosterol biosynthesis; zymosterol from lanosterol: step 3/6. The protein operates within steroid biosynthesis; cholesterol biosynthesis. Functionally, catalyzes the three-step monooxygenation required for the demethylation of 4,4-dimethyl and 4alpha-methylsterols, which can be subsequently metabolized to cholesterol. The polypeptide is Methylsterol monooxygenase 1 (Msmo1) (Mus musculus (Mouse)).